We begin with the raw amino-acid sequence, 405 residues long: Imidazolonepropionase (405 aa).

Positions 70 and 72 each coordinate Fe(3+). Residues histidine 70 and histidine 72 each coordinate Zn(2+). 4-imidazolone-5-propanoate contacts are provided by arginine 79, tyrosine 142, and histidine 175. Position 142 (tyrosine 142) interacts with N-formimidoyl-L-glutamate. A Fe(3+)-binding site is contributed by histidine 240. Histidine 240 contacts Zn(2+). Residue glutamine 243 participates in 4-imidazolone-5-propanoate binding. Aspartate 315 contributes to the Fe(3+) binding site. Aspartate 315 is a Zn(2+) binding site. The N-formimidoyl-L-glutamate site is built by asparagine 317 and glycine 319. Serine 320 lines the 4-imidazolone-5-propanoate pocket.

The protein belongs to the metallo-dependent hydrolases superfamily. HutI family. Requires Zn(2+) as cofactor. Fe(3+) is required as a cofactor.

The protein localises to the cytoplasm. It carries out the reaction 4-imidazolone-5-propanoate + H2O = N-formimidoyl-L-glutamate. It participates in amino-acid degradation; L-histidine degradation into L-glutamate; N-formimidoyl-L-glutamate from L-histidine: step 3/3. In terms of biological role, catalyzes the hydrolytic cleavage of the carbon-nitrogen bond in imidazolone-5-propanoate to yield N-formimidoyl-L-glutamate. It is the third step in the universal histidine degradation pathway. The protein is Imidazolonepropionase of Ruegeria sp. (strain TM1040) (Silicibacter sp.).